Reading from the N-terminus, the 524-residue chain is Probable beta-1,4-xylosyltransferase IRX14 (524 aa).

Topologically, residues 1–51 (MMKSLLPQSQLRRSAAAASAARSSGGGAGSGGADGAGSDGGAGGRAPATST) are cytoplasmic. The segment at 21–41 (ARSSGGGAGSGGADGAGSDGG) is disordered. A compositionally biased stretch (gly residues) spans 24–41 (SGGGAGSGGADGAGSDGG). A helical; Signal-anchor for type II membrane protein membrane pass occupies residues 52–71 (FWFLLHALCCLVSLFLGFRF). Over 72–524 (SRLLFFLLFS…SRSTTKRKEN (453 aa)) the chain is Lumenal. N-linked (GlcNAc...) asparagine glycosylation is found at Asn-132, Asn-135, Asn-240, and Asn-353. The tract at residues 492–524 (AELVDSKQDQEGRRLSRTDRSSRSRSTTKRKEN) is disordered. Residues 495-513 (VDSKQDQEGRRLSRTDRSS) show a composition bias toward basic and acidic residues.

It belongs to the glycosyltransferase 43 family.

The protein localises to the golgi apparatus membrane. In terms of biological role, probable beta-1,4-xylosyltransferase involved in xylan biosynthesis in cell walls. The chain is Probable beta-1,4-xylosyltransferase IRX14 from Oryza sativa subsp. japonica (Rice).